The following is a 355-amino-acid chain: Transcription factor TGAL9 (355 aa).

2 disordered regions span residues 83 to 104 and 118 to 188; these read FPSQPMHAGEPSPKGSSSMAAI and GSSK…DAKT. Positions 118-134 are enriched in low complexity; the sequence is GSSKRPPAAAAAGGQPS. A compositionally biased stretch (polar residues) spans 135-144; that stretch reads RLNNPADQPS. Composition is skewed to basic and acidic residues over residues 148-159 and 176-188; these read KDGKAAVVKKEG and SEHEGPKTPDAKT. Positions 185-230 constitute a bZIP domain; that stretch reads DAKTLRRLAQNREAARKSRLRKKAYIQNLETSRIRLSQLEQELVQR. The basic motif stretch occupies residues 187 to 207; it reads KTLRRLAQNREAARKSRLRKK. The interval 213–227 is leucine-zipper; sequence LETSRIRLSQLEQEL. The DOG1 domain maps to 254-355; that stretch reads AAWFDGEYAR…RPSELIKVST (102 aa).

This sequence belongs to the bZIP family. In terms of assembly, interacts with NPR5/NH4, NH5.1 and NH5.2.

The protein resides in the nucleus. In terms of biological role, transcriptional regulator involved in defense response. The polypeptide is Transcription factor TGAL9 (Oryza sativa subsp. japonica (Rice)).